The primary structure comprises 222 residues: Dual specificity phosphatase 29 (222 aa).

Residues 54-202 (HVNEVWPKLY…LRELDKQLVQ (149 aa)) form the Tyrosine-protein phosphatase domain. Position 146 to 153 (146 to 153 (HCAMGRSR)) interacts with substrate. Residue C147 is the Phosphocysteine intermediate of the active site. The segment at 201 to 222 (VQQRRGAQHRGEAGEKAGEKEP) is disordered. A compositionally biased stretch (basic and acidic residues) spans 209–222 (HRGEAGEKAGEKEP).

The protein belongs to the protein-tyrosine phosphatase family. Non-receptor class dual specificity subfamily. Homodimer. Interacts with PRKAA2.

The protein localises to the cytoplasm. It is found in the nucleus. The enzyme catalyses O-phospho-L-tyrosyl-[protein] + H2O = L-tyrosyl-[protein] + phosphate. The catalysed reaction is O-phospho-L-seryl-[protein] + H2O = L-seryl-[protein] + phosphate. It catalyses the reaction O-phospho-L-threonyl-[protein] + H2O = L-threonyl-[protein] + phosphate. Its function is as follows. Dual specificity phosphatase able to dephosphorylate phosphotyrosine, phosphoserine and phosphothreonine residues within the same substrate, with a preference for phosphotyrosine as a substrate. Involved in the modulation of intracellular signaling cascades. In skeletal muscle regulates systemic glucose homeostasis by activating, AMPK, an energy sensor protein kinase. Affects MAP kinase signaling though modulation of the MAPK1/2 cascade in skeletal muscle promoting muscle cell differentiation, development and atrophy. This Sus scrofa (Pig) protein is Dual specificity phosphatase 29 (DUSP29).